The chain runs to 524 residues: Probable myosin-binding protein 5 (524 aa).

The chain crosses the membrane as a helical span at residues 20–40 (FLIYALLEWILIIILFIDGFL). The GTD-binding domain occupies 299 to 397 (SILQHLNRQV…ELEAGIEVYR (99 aa)). A coiled-coil region spans residues 462 to 490 (SRKDMLVKEISEITERLNAIESKGELLQQ).

The protein resides in the membrane. Functionally, probable membrane-anchored myosin receptors. The protein is Probable myosin-binding protein 5 of Arabidopsis thaliana (Mouse-ear cress).